A 246-amino-acid chain; its full sequence is Mast cell protease 9 (246 aa).

The N-terminal stretch at 1–18 (MQALLFLMALLLPSRAGA) is a signal peptide. Positions 19–20 (EE) are cleaved as a propeptide — activation peptide. In terms of domain architecture, Peptidase S1 spans 21 to 244 (IIGGVESEPH…HVPWINRVIK (224 aa)). An intrachain disulfide couples cysteine 50 to cysteine 66. Residues histidine 65 and aspartate 109 each act as charge relay system in the active site. Cystine bridges form between cysteine 143-cysteine 208 and cysteine 174-cysteine 187. Serine 202 acts as the Charge relay system in catalysis.

This sequence belongs to the peptidase S1 family. Granzyme subfamily. As to expression, selectively expressed in uterine mast cells.

The polypeptide is Mast cell protease 9 (Mcpt9) (Mus musculus (Mouse)).